The primary structure comprises 401 residues: Elongation factor Tu 1 (401 aa).

The tr-type G domain occupies 10-209 (KPHVNVGTIG…AVDEYIPTPV (200 aa)). The tract at residues 19–26 (GHVDHGKT) is G1. 19 to 26 (GHVDHGKT) is a GTP binding site. Position 26 (Thr-26) interacts with Mg(2+). Positions 60–64 (GITIA) are G2. Residues 81–84 (DCPG) are G3. Residues 81–85 (DCPGH) and 136–139 (NKVD) each bind GTP. Residues 136 to 139 (NKVD) form a G4 region. The G5 stretch occupies residues 174 to 176 (SAL).

Belongs to the TRAFAC class translation factor GTPase superfamily. Classic translation factor GTPase family. EF-Tu/EF-1A subfamily. As to quaternary structure, monomer.

The protein localises to the cytoplasm. It catalyses the reaction GTP + H2O = GDP + phosphate + H(+). Functionally, GTP hydrolase that promotes the GTP-dependent binding of aminoacyl-tRNA to the A-site of ribosomes during protein biosynthesis. This is Elongation factor Tu 1 from Roseiflexus sp. (strain RS-1).